Here is a 122-residue protein sequence, read N- to C-terminus: Large ribosomal subunit protein uL14 (122 aa).

Belongs to the universal ribosomal protein uL14 family. Part of the 50S ribosomal subunit. Forms a cluster with proteins L3 and L19. In the 70S ribosome, L14 and L19 interact and together make contacts with the 16S rRNA in bridges B5 and B8.

In terms of biological role, binds to 23S rRNA. Forms part of two intersubunit bridges in the 70S ribosome. This Fusobacterium nucleatum subsp. nucleatum (strain ATCC 25586 / DSM 15643 / BCRC 10681 / CIP 101130 / JCM 8532 / KCTC 2640 / LMG 13131 / VPI 4355) protein is Large ribosomal subunit protein uL14.